Consider the following 246-residue polypeptide: tRNA pseudouridine synthase A (246 aa).

Catalysis depends on Asp52, which acts as the Nucleophile. Tyr111 is a substrate binding site.

Belongs to the tRNA pseudouridine synthase TruA family. As to quaternary structure, homodimer.

The catalysed reaction is uridine(38/39/40) in tRNA = pseudouridine(38/39/40) in tRNA. Formation of pseudouridine at positions 38, 39 and 40 in the anticodon stem and loop of transfer RNAs. The chain is tRNA pseudouridine synthase A from Fervidobacterium nodosum (strain ATCC 35602 / DSM 5306 / Rt17-B1).